Reading from the N-terminus, the 676-residue chain is MASPSSLLSWPHRAISLSFQPKNPSPSPATARVSVQDPPPPPSDANPSPGRSSNTSRYVWVNPNSPRAAGLARARAGSGRRARLAAAAAALAACEAGEAPVAAALEAAFPEPPSEQDAVIVLNTTSARPAAVVLALWWFLRNAEVRKEVILYNVALKALRKRRRWSDAEALWEEMLREGVQPDNATFSTVISCARACGMPGKAVEWFEKMPDFGCSPDMLTYSAVIDAYGRAGDAETALRLYDRARAEKWQLDPVICATVIRVHSSSGNFDGALNVFEEMKAAGVKPNLVVYNTVLDAMGRAMRPWVVKTIHRELVSQEAVPNKATYCCLLHAYTRARYGEDAMAVYRVMKDEVMDIDVVLYNMLLSMCADIGYVEEAEEIFRDMKASMDSRSKPDSWSYSSMVTLYSCTGNVAGAEGILNEMVEAGFKPNIFILTSLIRCYGKAGRTDDVVRSFAMLEDLGITPDDRFCGCLLTVAAGTPADELGKVIGCIDRSSAQLGAVVRLLVDAAAPSEPLREAAGELLGGARGVVRMPYCNCLMDLAVNLSQMEKACALLDVALRLGIYSNVQTRTQTQWSLHLRGLSVGAALTTLHVWMSDLYAALQAGDELPPLLGIHTGQGKNTYSYKGLATVFESHLKELDAPFHEAPDKAGWFLTTSVAARHWLETKKSAELVAV.

The transit peptide at 1-73 (MASPSSLLSW…NSPRAAGLAR (73 aa)) directs the protein to the chloroplast. The interval 17–58 (LSFQPKNPSPSPATARVSVQDPPPPPSDANPSPGRSSNTSRY) is disordered. 10 PPR repeats span residues 148–182 (EVIL…GVQP), 183–217 (DNAT…GCSP), 218–252 (DMLT…KWQL), 253–287 (DPVI…GVKP), 288–322 (NLVV…EAVP), 323–353 (NKAT…MKDE), 358–388 (DVVL…MKAS), 396–430 (DSWS…GFKP), 431–465 (NIFI…GITP), and 532–566 (RMPY…GIYS). The 85-residue stretch at 578 to 662 (LHLRGLSVGA…WFLTTSVAAR (85 aa)) folds into the Smr domain.

It belongs to the PPR family. P subfamily.

The protein resides in the plastid. It localises to the chloroplast. In terms of biological role, involved in translation and accumulation of chloroplast ATP synthase subunits. The chain is Pentatricopeptide repeat-containing protein ATP4 homolog, chloroplastic from Oryza sativa subsp. japonica (Rice).